Reading from the N-terminus, the 268-residue chain is Probable membrane transporter protein HI_0806 (268 aa).

The next 8 helical transmembrane spans lie at 6 to 26 (IFIL…FGIG), 46 to 66 (VISA…LLFF), 79 to 99 (ILWS…SFYF), 101 to 121 (TAII…KTFL), 147 to 167 (GGGL…APLV), 178 to 198 (IAVY…YGYL), 212 to 232 (LGLN…MSFF), and 248 to 268 (LLAI…FVFH).

Belongs to the 4-toluene sulfonate uptake permease (TSUP) (TC 2.A.102) family.

It is found in the cell membrane. In Haemophilus influenzae (strain ATCC 51907 / DSM 11121 / KW20 / Rd), this protein is Probable membrane transporter protein HI_0806.